A 197-amino-acid chain; its full sequence is Dephospho-CoA kinase (197 aa).

The region spanning 2–197 is the DPCK domain; it reads IIGLTGGIAS…GAIKDLANLV (196 aa). 10-15 serves as a coordination point for ATP; the sequence is ASGKST.

This sequence belongs to the CoaE family.

It localises to the cytoplasm. The enzyme catalyses 3'-dephospho-CoA + ATP = ADP + CoA + H(+). It functions in the pathway cofactor biosynthesis; coenzyme A biosynthesis; CoA from (R)-pantothenate: step 5/5. In terms of biological role, catalyzes the phosphorylation of the 3'-hydroxyl group of dephosphocoenzyme A to form coenzyme A. This is Dephospho-CoA kinase from Streptococcus thermophilus (strain ATCC BAA-250 / LMG 18311).